Consider the following 122-residue polypeptide: Mth938 domain-containing protein (122 aa).

Residues 6 to 122 form an MTH138-like domain region; the sequence is IASLSWGQMK…RVGGVFHSTC (117 aa).

The protein belongs to the AAMDC family.

Its subcellular location is the cytoplasm. Its function is as follows. May play a role in preadipocyte differentiation and adipogenesis. The chain is Mth938 domain-containing protein (AAMDC) from Homo sapiens (Human).